Consider the following 4776-residue polypeptide: Pneumococcal serine-rich repeat protein (4776 aa).

A signal peptide spans 1–72 (MTETVEDKVS…VVLGTISTSN (72 aa)). Residues Ser-73, Ser-75, Ser-76, Ser-78, Ser-80, Ser-82, Ser-94, Ser-100, Ser-108, Ser-110, Ser-118, Ser-120, and Ser-121 are each glycosylated (O-linked (GlcNAc...) serine). The serine-rich repeat region 1, SRR1 stretch occupies residues 73–121 (SASSTSLSASESASTSASESASTSASTSASTSASESASTSASTSISASS). The disordered stretch occupies residues 86 to 112 (STSASESASTSASTSASTSASESASTS). The segment at 122-166 (TVVGSQTAAATEATAKKVEEDRKKPASDYVASVTNVNLQSYAKRR) is self aggregating domain. A basic region, BR region spans residues 122-394 (TVVGSQTAAA…QSKSLSVSAS (273 aa)). The short motif at 164–168 (KRRKR) is the Host furin cleavage recognition element. The segment at 273-341 (TQTMLTLGSD…GYGLTSSWTV (69 aa)) is keratin 10-binding domain, cell-type specific binding to lung-derived cells. The serine-rich repeat region 2, SRR2 stretch occupies residues 395 to 4712 (QSASASASTS…ASTSASASAS (4318 aa)). 27 disordered regions span residues 481 to 627 (ASTS…STSA), 861 to 889 (ASAS…SAST), 925 to 965 (ASAS…SASA), 1052 to 1085 (SAST…SASA), 1123 to 1153 (ASAS…STSA), 1171 to 1199 (ASAS…STSA), 1311 to 1357 (ASES…SAST), 1671 to 1731 (ASES…SESA), 1792 to 1863 (SASE…STSA), 2105 to 2133 (ASAS…SAST), 2169 to 2209 (ASAS…SASA), 2296 to 2329 (SAST…SASA), 2367 to 2397 (ASAS…STSA), 2415 to 2443 (ASAS…STSA), 2571 to 2631 (ASES…SESA), 2737 to 2805 (ESAS…STSA), 2855 to 3113 (ASAS…STSA), 3347 to 3375 (ASAS…SAST), 3411 to 3451 (ASAS…SASA), 3538 to 3571 (SAST…SASA), 3609 to 3639 (ASAS…STSA), 3657 to 3685 (ASAS…STSA), 3797 to 3843 (ASES…SAST), 4167 to 4197 (ASAS…STSA), 4215 to 4243 (ASAS…STSA), 4355 to 4401 (ASES…SAST), and 4706 to 4747 (SASA…GTES). Residues 4715 to 4747 (VSNSANHSNSQVGNTSGSTGKSQKELPNTGTES) show a composition bias toward polar residues. The short motif at 4740-4744 (LPNTG) is the LPXTG sorting signal element. Thr-4743 is modified (pentaglycyl murein peptidoglycan amidated threonine). The propeptide at 4744–4776 (GTESSIGSVLLGVLAAVTGIGLVAKRRKRDEEE) is removed by sortase.

It belongs to the serine-rich repeat protein (SRRP) family. In terms of assembly, binds to human and mouse protein keratin 10 (KRT10). Glycosylated. Only truncated substrates greater than 25 residues long are glycosylated by the Gtf1-Gtf2 complex in vitro; only Ser residues have been seen to be glycosylated. Based on electrophoretic mobility it is probable that most of the Ser residues in SSR1 and SSR2 are O-GlcNAcylated. Subsequent glycosylation by up to 7 sugar transferases (Gtf3 and GlyAT, GlyB, GlyD, GlyE, GlyF and GlyG) is able to generate very high sugar polymorphism. Post-translationally, can be cleaved by human furin protease; this fragment contributes to self-aggregation and possibly biofilm formation in vitro.

The protein localises to the secreted. Its subcellular location is the cell wall. It is found in the cell surface. In terms of biological role, protein that allows bacteria to adhere to mammalian host cells. Required for full virulence in mouse infection models when infected intranasally. Required for adhesion to host cells in vitro and for persistence in the lower respiratory tract. Binds host keratin 10 (KRT10) on lung cells which mediates adhesion via the C-terminus of the basic region (BR, residues 273-341); glycosylation of either protein is not required for the interaction. A region in the N-terminus (residues 122-166) self aggregates, contributing to mature biofilm formation. The basic region (BR, residues 187-385) also self aggregates; the BR binds DNA which enhances self aggregation. In Streptococcus pneumoniae serotype 4 (strain ATCC BAA-334 / TIGR4), this protein is Pneumococcal serine-rich repeat protein.